The primary structure comprises 166 residues: MKFALVLLGICAFYLVNATGDLETELEASELQELQEALDLIGETSLESLEAEELEEARKFKWGKLFSAAKKLYKKGKKLSKNKNFKKALKFGKQLAKNLQAGEEHEPGTPVGNNKCWAIGTTCSDDCDCCPEHHCHCPAGKWLPGLFRCTCQVTESDKVNKCPPAE.

The N-terminal stretch at 1 to 18 (MKFALVLLGICAFYLVNA) is a signal peptide. Residues 19–58 (TGDLETELEASELQELQEALDLIGETSLESLEAEELEEAR) constitute a propeptide, removed in mature form. The interval 59-99 (KFKWGKLFSAAKKLYKKGKKLSKNKNFKKALKFGKQLAKNL) is linear cationic cytotoxin domain. Residues 113–166 (NNKCWAIGTTCSDDCDCCPEHHCHCPAGKWLPGLFRCTCQVTESDKVNKCPPAE) enclose the Oxytoxin-type inhibitor cystine knot (ICK) domain. Disulfide bonds link Cys116/Cys130, Cys123/Cys135, Cys127/Cys162, Cys129/Cys151, and Cys137/Cys149.

It belongs to the spiderine family. Cationic/spiderine subfamily. Expressed by the venom gland.

It localises to the secreted. Has antimicrobial, insecticidal, cytolytic and cytotoxic activity. In Oxyopes takobius (Lynx spider), this protein is Spiderine-1b.